Reading from the N-terminus, the 205-residue chain is SREBP regulating gene protein (205 aa).

The Cytoplasmic portion of the chain corresponds to 1–16; sequence MLNLAALLWRRLLRKR. Residues 17 to 35 form a helical membrane-spanning segment; that stretch reads WVLALVFGLSLVYFLSSTF. The Lumenal segment spans residues 36–205; it reads KQEERAVRDR…GESPPELFPA (170 aa). An N-linked (GlcNAc...) asparagine glycan is attached at Asn67.

The protein belongs to the SPRING family. In terms of assembly, interacts with SCAP. In terms of tissue distribution, ubiquitously expressed with a slightly higher expression in the liver and kidney.

It localises to the golgi apparatus membrane. Positively regulates hepatic SREBP signaling pathway by modulating the proper localization of SCAP (SREBP cleavage-activating protein) to the endoplasmic reticulum, thereby controlling the level of functional SCAP. Plays a crucial role during embryogenesis. This chain is SREBP regulating gene protein (Spring1), found in Mus musculus (Mouse).